Here is a 246-residue protein sequence, read N- to C-terminus: 23S rRNA (guanosine-2'-O-)-methyltransferase RlmB (246 aa).

Residues glycine 198, isoleucine 218, and leucine 227 each contribute to the S-adenosyl-L-methionine site.

It belongs to the class IV-like SAM-binding methyltransferase superfamily. RNA methyltransferase TrmH family. RlmB subfamily.

Its subcellular location is the cytoplasm. It catalyses the reaction guanosine(2251) in 23S rRNA + S-adenosyl-L-methionine = 2'-O-methylguanosine(2251) in 23S rRNA + S-adenosyl-L-homocysteine + H(+). Functionally, specifically methylates the ribose of guanosine 2251 in 23S rRNA. This is 23S rRNA (guanosine-2'-O-)-methyltransferase RlmB from Shewanella oneidensis (strain ATCC 700550 / JCM 31522 / CIP 106686 / LMG 19005 / NCIMB 14063 / MR-1).